Consider the following 330-residue polypeptide: Phosphate acyltransferase (330 aa).

It belongs to the PlsX family. As to quaternary structure, homodimer. Probably interacts with PlsY.

It is found in the cytoplasm. It catalyses the reaction a fatty acyl-[ACP] + phosphate = an acyl phosphate + holo-[ACP]. It participates in lipid metabolism; phospholipid metabolism. Catalyzes the reversible formation of acyl-phosphate (acyl-PO(4)) from acyl-[acyl-carrier-protein] (acyl-ACP). This enzyme utilizes acyl-ACP as fatty acyl donor, but not acyl-CoA. The chain is Phosphate acyltransferase from Lactobacillus delbrueckii subsp. bulgaricus (strain ATCC 11842 / DSM 20081 / BCRC 10696 / JCM 1002 / NBRC 13953 / NCIMB 11778 / NCTC 12712 / WDCM 00102 / Lb 14).